The primary structure comprises 118 residues: UPF0295 protein BCG9842_B4782 (118 aa).

The next 2 helical transmembrane spans lie at 12–32 (IRTFALSLVFIGLFIAYLGVF) and 43–63 (FMMVGFLAVIASTVVYFWIGM).

The protein belongs to the UPF0295 family.

It localises to the cell membrane. The protein is UPF0295 protein BCG9842_B4782 of Bacillus cereus (strain G9842).